Here is a 148-residue protein sequence, read N- to C-terminus: Macrodomain Ter protein (148 aa).

The protein belongs to the MatP family. Homodimer.

Its subcellular location is the cytoplasm. Functionally, required for spatial organization of the terminus region of the chromosome (Ter macrodomain) during the cell cycle. Prevents early segregation of duplicated Ter macrodomains during cell division. Binds specifically to matS, which is a 13 bp signature motif repeated within the Ter macrodomain. This is Macrodomain Ter protein from Haemophilus influenzae (strain PittGG).